The primary structure comprises 83 residues: Alpha-toxin CvIV4 (83 aa).

Positions 1 to 19 (MNYFILILVAALLILDVNC) are cleaved as a signal peptide. One can recognise an LCN-type CS-alpha/beta domain in the interval 21 to 79 (KDGYPVEHSGCKYTCWKNEYCDKVCKDLKGEGGYCYINLTCWCTGLPDNVPLKTNQRCN). 4 cysteine pairs are disulfide-bonded: Cys31-Cys78, Cys35-Cys55, Cys41-Cys61, and Cys45-Cys63.

The protein belongs to the long (4 C-C) scorpion toxin superfamily. Sodium channel inhibitor family. As to expression, expressed by the venom gland.

It localises to the secreted. Functionally, this toxin significantly slows the fast inactivation of Nav1.2/SCN2A (EC(50)=580 nM), Nav1.3/SCN3A (EC(50)=1310 nM), Nav1.4/SCN4A (EC(50)=530 nM), and Nav1.7/SCN9A (EC(50)=1340 nM). The toxin does not affect the peak amplitude of Nav1.7 currents. On all channels cited above, the toxin requires depolarizing potentials to slow channel inactivation. In addition, the toxin has no or very weak effects on the voltage-dependence of steady-state inactivation, and on voltage-dependence of activation. In vivo, it produces paw licking in mice equivalent to the effects of whole venom. This Centruroides vittatus (Striped bark scorpion) protein is Alpha-toxin CvIV4.